The primary structure comprises 135 residues: uncharacterized protein (135 aa).

This is an uncharacterized protein from Rickettsia prowazekii (strain Madrid E).